Here is a 735-residue protein sequence, read N- to C-terminus: Glutamine-dependent NAD(+) synthetase (735 aa).

The region spanning 4-274 is the CN hydrolase domain; it reads LRVATCNLNQ…VEVLDALVDL (271 aa). Glu44 serves as the catalytic Proton acceptor; for glutaminase activity. Lys113 functions as the For glutaminase activity in the catalytic mechanism. The active-site Nucleophile; for glutaminase activity is Cys174. The interval 324–711 is ligase; it reads YHRPEEEIAF…STEGELRRRK (388 aa). ATP is bound at residue 354 to 361; the sequence is PLSGGADS. Ser356 is an active-site residue.

The protein in the C-terminal section; belongs to the NAD synthetase family.

It catalyses the reaction deamido-NAD(+) + L-glutamine + ATP + H2O = L-glutamate + AMP + diphosphate + NAD(+) + H(+). It participates in cofactor biosynthesis; NAD(+) biosynthesis; NAD(+) from deamido-NAD(+) (L-Gln route): step 1/1. In Oryza sativa subsp. indica (Rice), this protein is Glutamine-dependent NAD(+) synthetase.